The primary structure comprises 1940 residues: Myosin-2 (1940 aa).

The 50-residue stretch at 33 to 82 (DAKTSVFVAEPKESFVKGTVQSREGGKVTVKTEAGATLTVKEDQVFPMNP) folds into the Myosin N-terminal SH3-like domain. Phosphothreonine occurs at positions 64 and 69. Residues 86–783 (DKIEDMAMMT…LLGLLEEMRD (698 aa)) form the Myosin motor domain. Lys-130 carries the post-translational modification N6,N6,N6-trimethyllysine. 179-186 (GESGAGKT) provides a ligand contact to ATP. Tyr-389 carries the post-translational modification Phosphotyrosine. Phosphoserine is present on Ser-392. At Thr-419 the chain carries Phosphothreonine. Residue Ser-625 is modified to Phosphoserine. The interval 660–682 (LNKLMTNLRSTHPHFVRCIIPNE) is actin-binding. Residue His-758 is modified to Pros-methylhistidine. Residues 762–776 (KFGHTKVFFKAGLLG) are actin-binding. The 30-residue stretch at 786–815 (LAQLITRTQARCRGFLARVEYQKMVERRES) folds into the IQ domain. Residues 844 to 1940 (LLKSAETEKE…EVHTKVISEE (1097 aa)) adopt a coiled-coil conformation. Residues Ser-1093, Ser-1097, Ser-1163, and Ser-1238 each carry the phosphoserine modification. A disordered region spans residues 1154-1173 (RLEEAGGATSAQIEMNKKRE). Thr-1242 is subject to Phosphothreonine. Residue Ser-1244 is modified to Phosphoserine. Position 1256 is a phosphothreonine (Thr-1256). Ser-1262 carries the post-translational modification Phosphoserine. A Phosphothreonine modification is found at Thr-1287. 4 positions are modified to phosphoserine: Ser-1289, Ser-1293, Ser-1304, and Ser-1307. A Phosphotyrosine modification is found at Tyr-1465. At Thr-1468 the chain carries Phosphothreonine. The residue at position 1475 (Ser-1475) is a Phosphoserine. The residue at position 1493 (Tyr-1493) is a Phosphotyrosine. Phosphoserine is present on Ser-1496. Thr-1502 carries the phosphothreonine modification. The residue at position 1515 (Ser-1515) is a Phosphoserine. Thr-1518 carries the phosphothreonine modification. Phosphoserine occurs at positions 1543, 1555, 1575, 1601, 1715, and 1727. A phosphothreonine mark is found at Thr-1731 and Thr-1737. Ser-1740 bears the Phosphoserine mark. Positions 1884 to 1920 (KRQAEEAEEQSNTNLSKFRKLQHELEEAEERADIAES) are disordered.

It belongs to the TRAFAC class myosin-kinesin ATPase superfamily. Myosin family. Muscle myosin is a hexameric protein that consists of 2 heavy chain subunits (MHC), 2 alkali light chain subunits (MLC) and 2 regulatory light chain subunits (MLC-2). Interacts with GCSAM.

The protein localises to the cytoplasm. It localises to the myofibril. Its function is as follows. Myosins are actin-based motor molecules with ATPase activity essential for muscle contraction. This chain is Myosin-2 (MYH2), found in Canis lupus familiaris (Dog).